The sequence spans 112 residues: UPF0102 protein C8J_0145 (112 aa).

It belongs to the UPF0102 family.

The sequence is that of UPF0102 protein C8J_0145 from Campylobacter jejuni subsp. jejuni serotype O:6 (strain 81116 / NCTC 11828).